The sequence spans 1410 residues: MGGPLTAAGGRGDGGAKAVEPLRPPPPPDPKTMARWYQLEALERAVRGNTLAFLETGSGKTLIAVMLLRAYAHRVRRPDSRRFAVFLVPTVVLVGQQARVVEQHTDLVVKQFCGEMGVDFWDAATWRSQLEDGEVLVMTPQILLDNLRHSFFRLQDIALLIFDECHHARGNTPYACIFKEFYHPQLNSSASDPLPRIFGMSASLIYSKDLNPHNYSKQISEIENLMNSKVYTVDSESALSEYIPFASTKIVDFDDSNISSELHANILSCLNRLNKKHIEALDRKLHGSSLENAKQRISKLHHTFVYCLYNLGVWLAAKAAEVQSYEENSLSFWGETLDKNVEGFIRNYSEEVHRELSCFLKNGHIGEKFPADSQDGILTPKVHCLIRTLLQYRHMQDLRCIVFVERVITSIVLEHLLSSIHQMSGWNVKHMAGSRPGLLSQSRKNHTEIVESFRKGKVHIIIATQILEEGLDVPSCNLVIRFDPSATVCSFIQSRGRARMENSDYLLLVGRGDVEAQTNAEKFLASGQIMREESLRLGSISCQPLENTLCEDTYYRVESTRAIVTLNSSVPLIHFFCSKLPSDEYFNPLPRFDIDKASGTCTLHLPKSSPVQTVNVEGEGSILKETVCLKACQELHAIGALTDSLLPELDVPCDEEPDIVVENKIEQPSYFPEEFVDNWRSFSRLGIYYCYKISLEGCPKTASPTDILLALKCDLGSDFTSSSFKLPGGQDNASVTMKYVGIIHLNQEQVIIARRFQTTILSFLIGDDHLEVSNGIKYFHEMQVPIGVVYLLLPLVSGRIDWCSMKFSSSPIYEANNKHMTHCHSCKDIDLLQTKDGPFCRCILKNSIVCTPHNNIFYVISGFLDLDANSCLPQHDGTVVTYKDYFKTRHGLTLTFENQPLLAGSKHVKVRNFLHNCYSKKEKEPGDRYSVELPPELCRIIMSPVSANNLHIFSYVPSIMFRIQCMLLSVKLKVQLGPTVQQFDVPVLKILEALTTKKCQEEFSQESLETLGDSFLKYVTTRHLFSEYRLQHEGILTKMKKNLISNAALCQLACSSNLVGYIHAEEFNPRDWIIPCLDYDERDNKKISFLAPNGMYSQRKMSIKSKRIADSVEALIGAYLSTAGEKAAFLLMKSLGMNIEFHTEIPVERKISMKAEEFINVRSLEGMLGYKFNDSLLLLEALTHGSYQTSGPTSCYQRLEFLGDAILDHLFTEYYYSKYPDCTPELLTDLRSASVNNNCYAHAAVKSGLNKHILHSSSELHRKMSYYLEEFGQSFTGPSYGWEAGIGLPKVLGDVIESIAGAIYLDSKCDKEVVWRSMKRLLEPLATPETIEPDPVKGLQEFCDRRSFKITYEKNHVDGVSSVIARVKAGETTYSATKSGPCKLVAKKLASKAVLKDLIAGHKDTEAAAV.

A compositionally biased stretch (gly residues) spans 1-15 (MGGPLTAAGGRGDGG). The interval 1–30 (MGGPLTAAGGRGDGGAKAVEPLRPPPPPDP) is disordered. Positions 41–222 (ALERAVRGNT…HNYSKQISEI (182 aa)) constitute a Helicase ATP-binding domain. Residue 54–61 (LETGSGKT) coordinates ATP. The DECH box signature appears at 163 to 166 (DECH). Residues 388-561 (TLLQYRHMQD…DTYYRVESTR (174 aa)) enclose the Helicase C-terminal domain. Residues 569–655 (SVPLIHFFCS…LPELDVPCDE (87 aa)) enclose the Dicer dsRNA-binding fold domain. Residues 827–942 (KDIDLLQTKD…LPPELCRIIM (116 aa)) form the PAZ domain. RNase III domains lie at 969-1124 (SVKL…STAG) and 1161-1308 (VRSL…LDSK). Mg(2+)-binding residues include Glu1200, Asp1294, and Glu1297. The 67-residue stretch at 1334–1400 (DPVKGLQEFC…SKAVLKDLIA (67 aa)) folds into the DRBM domain.

The protein belongs to the helicase family. Dicer subfamily. May interact with ARGONAUTE1 or PINHEAD through their common PAZ domains. Mg(2+) is required as a cofactor. Mn(2+) serves as cofactor.

Its subcellular location is the nucleus. Probably involved in the RNA silencing pathway. May cleave double-stranded RNA to produce short 21-24 nucleotides (nt) RNAs which target the selective destruction of complementary RNAs. This chain is Endoribonuclease Dicer homolog 2a (DCL2A), found in Oryza sativa subsp. japonica (Rice).